The following is a 404-amino-acid chain: Cysteine desulfurase IscS (404 aa).

Residues 75 to 76 (AT), asparagine 155, glutamine 183, and 203 to 205 (SAH) each bind pyridoxal 5'-phosphate. Lysine 206 bears the N6-(pyridoxal phosphate)lysine mark. Pyridoxal 5'-phosphate is bound at residue threonine 243. Residue cysteine 328 is the Cysteine persulfide intermediate of the active site. Residue cysteine 328 participates in [2Fe-2S] cluster binding.

The protein belongs to the class-V pyridoxal-phosphate-dependent aminotransferase family. NifS/IscS subfamily. In terms of assembly, homodimer. Forms a heterotetramer with IscU, interacts with other sulfur acceptors. Pyridoxal 5'-phosphate is required as a cofactor.

It is found in the cytoplasm. It carries out the reaction (sulfur carrier)-H + L-cysteine = (sulfur carrier)-SH + L-alanine. The protein operates within cofactor biosynthesis; iron-sulfur cluster biosynthesis. Functionally, master enzyme that delivers sulfur to a number of partners involved in Fe-S cluster assembly, tRNA modification or cofactor biosynthesis. Catalyzes the removal of elemental sulfur atoms from cysteine to produce alanine. Functions as a sulfur delivery protein for Fe-S cluster synthesis onto IscU, an Fe-S scaffold assembly protein, as well as other S acceptor proteins. This is Cysteine desulfurase IscS from Pseudomonas putida (strain GB-1).